The primary structure comprises 560 residues: DNA ligase B (560 aa).

The N6-AMP-lysine intermediate role is filled by Lys-124.

It belongs to the NAD-dependent DNA ligase family. LigB subfamily.

The catalysed reaction is NAD(+) + (deoxyribonucleotide)n-3'-hydroxyl + 5'-phospho-(deoxyribonucleotide)m = (deoxyribonucleotide)n+m + AMP + beta-nicotinamide D-nucleotide.. Functionally, catalyzes the formation of phosphodiester linkages between 5'-phosphoryl and 3'-hydroxyl groups in double-stranded DNA using NAD as a coenzyme and as the energy source for the reaction. The chain is DNA ligase B from Escherichia coli O17:K52:H18 (strain UMN026 / ExPEC).